The primary structure comprises 392 residues: Probable protein phosphatase 2C 29 (392 aa).

Residues 44–353 (DYSVAVAQAN…DDITVVVLFL (310 aa)) form the PPM-type phosphatase domain. 4 residues coordinate Mn(2+): D75, G76, D285, and D344. The tract at residues 360-392 (AGRGDEIDGTDGPVDVFSLSPDDREDPTRPVLR) is disordered.

Belongs to the PP2C family. Mg(2+) serves as cofactor. Mn(2+) is required as a cofactor.

The catalysed reaction is O-phospho-L-seryl-[protein] + H2O = L-seryl-[protein] + phosphate. The enzyme catalyses O-phospho-L-threonyl-[protein] + H2O = L-threonyl-[protein] + phosphate. In Oryza sativa subsp. japonica (Rice), this protein is Probable protein phosphatase 2C 29.